A 149-amino-acid polypeptide reads, in one-letter code: Globin (149 aa).

A Globin domain is found at 2 to 149; the sequence is VLTKDEFDSL…KIFTGVAGQL (148 aa). Residue His-100 coordinates heme.

Belongs to the globin family. Monomer.

Functionally, oxygen binding protein. The polypeptide is Globin (Isoparorchis hypselobagri (Giant trematode)).